We begin with the raw amino-acid sequence, 906 residues long: Protein translocase subunit SecA (906 aa).

ATP contacts are provided by residues Q86, 104–108 (GEGKT), and D499. Zn(2+) is bound by residues C890, C892, C901, and H902.

This sequence belongs to the SecA family. As to quaternary structure, monomer and homodimer. Part of the essential Sec protein translocation apparatus which comprises SecA, SecYEG and auxiliary proteins SecDF-YajC and YidC. Requires Zn(2+) as cofactor.

It is found in the cell inner membrane. It localises to the cytoplasm. It carries out the reaction ATP + H2O + cellular proteinSide 1 = ADP + phosphate + cellular proteinSide 2.. Its function is as follows. Part of the Sec protein translocase complex. Interacts with the SecYEG preprotein conducting channel. Has a central role in coupling the hydrolysis of ATP to the transfer of proteins into and across the cell membrane, serving both as a receptor for the preprotein-SecB complex and as an ATP-driven molecular motor driving the stepwise translocation of polypeptide chains across the membrane. The chain is Protein translocase subunit SecA from Rickettsia prowazekii (strain Madrid E).